The primary structure comprises 509 residues: Midnolin (509 aa).

A compositionally biased stretch (polar residues) spans 1 to 12 (MDQHPSARSCSS). Residues 1–27 (MDQHPSARSCSSRGAAPSCESVSGEPP) are disordered. A Ubiquitin-like domain is found at 28–102 (MNLYIHSTTG…LTLVPTVEAG (75 aa)). Disordered regions lie at residues 172 to 295 (GSSE…NTPL), 370 to 404 (QCTSPNSPAPSPPPSPPHTTGLTGLPTTVPSETQP), and 448 to 485 (KRLRRKARRDSRAPYHWLPNRKAGRSNSNSSMSSEGSL). Positions 176–190 (GTTGLSHGASGSASG) are enriched in low complexity. Basic residues predominate over residues 196 to 209 (HNPHPHHPHQHPHH). A compositionally biased stretch (pro residues) spans 220–231 (AFPPSPSIPSIP). Low complexity predominate over residues 261–285 (PSSACAPSPSSPSPAASCPEASCSA). A compositionally biased stretch (polar residues) spans 286–295 (KTSGNCNTPL). The span at 376–386 (SPAPSPPPSPP) shows a compositional bias: pro residues. Positions 387–400 (HTTGLTGLPTTVPS) are enriched in low complexity.

Its subcellular location is the nucleus. It localises to the cytoplasm. The protein resides in the cytosol. It is found in the nucleolus. Functionally, facilitates ubiquitin-independent proteasomal degradation of polycomb protein CBX4. Plays a role in inhibiting the activity of glucokinase GCK and both glucose-induced and basal insulin secretion. This Danio rerio (Zebrafish) protein is Midnolin (midn).